A 194-amino-acid polypeptide reads, in one-letter code: Thiol:disulfide interchange protein CycY (194 aa).

Positions M1–S37 are cleaved as a signal peptide. A Thioredoxin domain is found at A46–E190. C92 and C95 form a disulfide bridge.

The protein belongs to the thioredoxin family. DsbE subfamily.

Its subcellular location is the periplasm. Its function is as follows. Required for disulfide bond formation in some periplasmic proteins. Also acts as a disulfide oxidoreductase in cytochromes c biogenesis. The cysteines of apocytochromes c must be in the reduced state for covalent linkage between the two moieties to occur. In Bradyrhizobium diazoefficiens (strain JCM 10833 / BCRC 13528 / IAM 13628 / NBRC 14792 / USDA 110), this protein is Thiol:disulfide interchange protein CycY (cycY).